We begin with the raw amino-acid sequence, 442 residues long: Transforming growth factor beta-2 proprotein (442 aa).

Residues 1-20 form the signal peptide; the sequence is MHYCVLRTFLLLHLVPVALS. N-linked (GlcNAc...) asparagine glycans are attached at residues Asn-72, Asn-168, and Asn-269. 4 disulfides stabilise this stretch: Cys-337/Cys-346, Cys-345/Cys-408, Cys-374/Cys-439, and Cys-378/Cys-441.

The protein belongs to the TGF-beta family. Interacts with the serine proteases, HTRA1 and HTRA3. Interacts with ASPN. Interacts with MFAP5. As to quaternary structure, interacts with Transforming growth factor beta-2 (TGF-beta-2) chain; interaction is non-covalent and maintains (TGF-beta-2) in a latent state. Interacts with LRRC32/GARP; leading to regulate activation of TGF-beta-2. Interacts with NREP; the interaction results in a decrease in TGFB2 autoinduction. In terms of assembly, transforming growth factor beta-2: Homodimer; disulfide-linked. Transforming growth factor beta-2: Interacts with TGF-beta receptors (TGFBR1 and TGFBR2), leading to signal transduction. Post-translationally, the precursor proprotein is cleaved in the Golgi apparatus to form Transforming growth factor beta-2 (TGF-beta-2) and Latency-associated peptide (LAP) chains, which remain non-covalently linked, rendering TGF-beta-2 inactive. In terms of tissue distribution, expressed in cardiomyocytes. As to expression, expressed in the aorta, primary bronchus, uterus, heart, skeletal muscle, sciatic nerve and spinal cord but not in the intestine.

The protein resides in the secreted. It is found in the extracellular space. Its subcellular location is the extracellular matrix. Precursor of the Latency-associated peptide (LAP) and Transforming growth factor beta-2 (TGF-beta-2) chains, which constitute the regulatory and active subunit of TGF-beta-2, respectively. Its function is as follows. Required to maintain the Transforming growth factor beta-2 (TGF-beta-2) chain in a latent state during storage in extracellular matrix. Associates non-covalently with TGF-beta-2 and regulates its activation via interaction with 'milieu molecules', such as LTBP1 and LRRC32/GARP, that control activation of TGF-beta-2. In terms of biological role, multifunctional protein that regulates various processes such as angiogenesis and heart development. Activation into mature form follows different steps: following cleavage of the proprotein in the Golgi apparatus, Latency-associated peptide (LAP) and Transforming growth factor beta-2 (TGF-beta-2) chains remain non-covalently linked rendering TGF-beta-2 inactive during storage in extracellular matrix. At the same time, LAP chain interacts with 'milieu molecules', such as LTBP1 and LRRC32/GARP, that control activation of TGF-beta-2 and maintain it in a latent state during storage in extracellular milieus. Once activated following release of LAP, TGF-beta-2 acts by binding to TGF-beta receptors (TGFBR1 and TGFBR2), which transduce signal. The polypeptide is Transforming growth factor beta-2 proprotein (Tgfb2) (Rattus norvegicus (Rat)).